Here is a 578-residue protein sequence, read N- to C-terminus: Arginine--tRNA ligase (578 aa).

The short motif at 127-137 is the 'HIGH' region element; that stretch reads PNLAKEMHVGH.

This sequence belongs to the class-I aminoacyl-tRNA synthetase family. Monomer.

It is found in the cytoplasm. It catalyses the reaction tRNA(Arg) + L-arginine + ATP = L-arginyl-tRNA(Arg) + AMP + diphosphate. This is Arginine--tRNA ligase from Pseudomonas putida (strain GB-1).